A 125-amino-acid chain; its full sequence is Small ribosomal subunit protein eS8 (125 aa).

Belongs to the eukaryotic ribosomal protein eS8 family. Part of the 30S ribosomal subunit.

The sequence is that of Small ribosomal subunit protein eS8 from Methanocorpusculum labreanum (strain ATCC 43576 / DSM 4855 / Z).